A 72-amino-acid polypeptide reads, in one-letter code: Cytochrome c oxidase subunit 2 (72 aa).

The Mitochondrial intermembrane segment spans residues 1–14; that stretch reads MAHPSQLGFQDAAS. A helical transmembrane segment spans residues 15–45; it reads PVMEELLHFHDHALMIVFLISTLVLYIIVAM. Residues 46-72 lie on the Mitochondrial matrix side of the membrane; it reads VSTKLTNKYXLDSQEIEVIWTXLPAVI.

It belongs to the cytochrome c oxidase subunit 2 family. As to quaternary structure, component of the cytochrome c oxidase (complex IV, CIV), a multisubunit enzyme composed of 14 subunits. The complex is composed of a catalytic core of 3 subunits MT-CO1, MT-CO2 and MT-CO3, encoded in the mitochondrial DNA, and 11 supernumerary subunits COX4I, COX5A, COX5B, COX6A, COX6B, COX6C, COX7A, COX7B, COX7C, COX8 and NDUFA4, which are encoded in the nuclear genome. The complex exists as a monomer or a dimer and forms supercomplexes (SCs) in the inner mitochondrial membrane with NADH-ubiquinone oxidoreductase (complex I, CI) and ubiquinol-cytochrome c oxidoreductase (cytochrome b-c1 complex, complex III, CIII), resulting in different assemblies (supercomplex SCI(1)III(2)IV(1) and megacomplex MCI(2)III(2)IV(2)). Found in a complex with TMEM177, COA6, COX18, COX20, SCO1 and SCO2. Interacts with TMEM177 in a COX20-dependent manner. Interacts with COX20. Interacts with COX16. The cofactor is Cu cation.

The protein localises to the mitochondrion inner membrane. It carries out the reaction 4 Fe(II)-[cytochrome c] + O2 + 8 H(+)(in) = 4 Fe(III)-[cytochrome c] + 2 H2O + 4 H(+)(out). Functionally, component of the cytochrome c oxidase, the last enzyme in the mitochondrial electron transport chain which drives oxidative phosphorylation. The respiratory chain contains 3 multisubunit complexes succinate dehydrogenase (complex II, CII), ubiquinol-cytochrome c oxidoreductase (cytochrome b-c1 complex, complex III, CIII) and cytochrome c oxidase (complex IV, CIV), that cooperate to transfer electrons derived from NADH and succinate to molecular oxygen, creating an electrochemical gradient over the inner membrane that drives transmembrane transport and the ATP synthase. Cytochrome c oxidase is the component of the respiratory chain that catalyzes the reduction of oxygen to water. Electrons originating from reduced cytochrome c in the intermembrane space (IMS) are transferred via the dinuclear copper A center (CU(A)) of subunit 2 and heme A of subunit 1 to the active site in subunit 1, a binuclear center (BNC) formed by heme A3 and copper B (CU(B)). The BNC reduces molecular oxygen to 2 water molecules using 4 electrons from cytochrome c in the IMS and 4 protons from the mitochondrial matrix. The polypeptide is Cytochrome c oxidase subunit 2 (mt-co2) (Gomphosus varius (Bird wrasse)).